A 336-amino-acid chain; its full sequence is Cytochrome P450 monooxygenase lcsN (336 aa).

Cys-271 serves as a coordination point for heme.

Belongs to the cytochrome P450 family. Heme serves as cofactor.

It participates in secondary metabolite biosynthesis. Cytochrome P450 monooxygenase; part of the gene cluster that mediates the biosynthesis of the lipopeptide antibiotics leucinostatins that show extensive biological activities, including antimalarial, antiviral, antibacterial, antifungal, and antitumor activities, as well as phytotoxic. Leucinostatin A contains nine amino acid residues, including the unusual amino acid 4-methyl-L-proline (MePro), 2-amino-6-hydroxy-4-methyl-8-oxodecanoic acid (AHyMeOA), 3-hydroxyleucine (HyLeu), alpha-aminoisobutyric acid (AIB), beta-Ala, a 4-methylhex-2-enoic acid at the N-terminus as well as a N1,N1-dimethylpropane-1,2-diamine (DPD) at the C-terminus. The biosynthesis of leucinostatins is probably initiated with the assembly of 4-methylhex-2-enoic acid by a reducing PKS. Two reducing polyketide synthases, lcsB and lcsC, have been identified in the cluster and it is not clear which is the one that assembles 4-methylhex-2-enoic acid since both contain KS, AT, DH, cMT, ER, KR and ACP domains. The polyketide residue might be transferred to the NRPS lcsA, mediated by two additional enzymes, the acyl-CoA ligase lcsD and the thioesterase lcsE. The linear polyketide carboxylic acid, which is released from PKS, is converted to a CoA thioester by lcsD, and then lcsE hydrolyzes the thiol bond and shuttles the polyketide intermediate to lcsA. The C domain of the first module catalyzed the condensation of 4-methylhex-2-enoic acid and MePro carried by domain A1, followed by successive condensations of nine amino acids to trigger the elongation of the linear peptide. A5 and A6 domains of lcsA are proposed to incorporate leucine, A2 AHyMeOA, and A3 incorporates HyLeu. A4, A7 and A8 incorporate AIB. The AHyMeOA in leucinostatin A activated by the A2 might be produced by the second PKS (lcsB or lcsC) present within the cluster. The MePro is probably produced via leucine cyclization and may originate from a separate pathway, independent of the cluster. Another nonproteinogenic amino acid, beta-Ala, could be produced by an aspartic acid decarboxylase also localized outside of the cluster. Two candidates are VFPBJ_01400 and VFPBJ_10476. The final peptide scaffold may be released by the NAD(P)H-dependent thioester reductase (TE) at the C-terminal region of lcsA. Transamination of the lcsA product by the transaminase lcsP may produce DPD at the C-terminus. Further hydroxylation steps performed alternatively by the cytochrome P450 monooxygenases lcsI, lcsK and lcsN then yield the non-methylated leucinostatins precursor. It is also possible that leucines can be hydroxylated prior to their incorporation into the peptide. Varying extents of methylation then lead to the formation of leucinostatins A and B. This chain is Cytochrome P450 monooxygenase lcsN, found in Purpureocillium lilacinum (Paecilomyces lilacinus).